Reading from the N-terminus, the 384-residue chain is 4-hydroxy-3-methylbut-2-en-1-yl diphosphate synthase (flavodoxin) (384 aa).

The [4Fe-4S] cluster site is built by C280, C283, C315, and E322.

The protein belongs to the IspG family. Requires [4Fe-4S] cluster as cofactor.

It carries out the reaction (2E)-4-hydroxy-3-methylbut-2-enyl diphosphate + oxidized [flavodoxin] + H2O + 2 H(+) = 2-C-methyl-D-erythritol 2,4-cyclic diphosphate + reduced [flavodoxin]. Its pathway is isoprenoid biosynthesis; isopentenyl diphosphate biosynthesis via DXP pathway; isopentenyl diphosphate from 1-deoxy-D-xylulose 5-phosphate: step 5/6. In terms of biological role, converts 2C-methyl-D-erythritol 2,4-cyclodiphosphate (ME-2,4cPP) into 1-hydroxy-2-methyl-2-(E)-butenyl 4-diphosphate. This Frankia casuarinae (strain DSM 45818 / CECT 9043 / HFP020203 / CcI3) protein is 4-hydroxy-3-methylbut-2-en-1-yl diphosphate synthase (flavodoxin).